We begin with the raw amino-acid sequence, 329 residues long: Ketol-acid reductoisomerase (NADP(+)) (329 aa).

The 181-residue stretch at 1-181 folds into the KARI N-terminal Rossmann domain; it reads MKVYYEQDAN…GGTRSGVIET (181 aa). NADP(+)-binding positions include 24-27, arginine 47, and 82-85; these read YGSQ and DQYQ. Residue histidine 107 is part of the active site. An NADP(+)-binding site is contributed by glycine 133. In terms of domain architecture, KARI C-terminal knotted spans 182-327; the sequence is TFREETETDL…ARLRSMMPWL (146 aa). Residues aspartate 190, glutamate 194, glutamate 226, and glutamate 230 each coordinate Mg(2+). Position 251 (serine 251) interacts with substrate.

It belongs to the ketol-acid reductoisomerase family. Requires Mg(2+) as cofactor.

The enzyme catalyses (2R)-2,3-dihydroxy-3-methylbutanoate + NADP(+) = (2S)-2-acetolactate + NADPH + H(+). It catalyses the reaction (2R,3R)-2,3-dihydroxy-3-methylpentanoate + NADP(+) = (S)-2-ethyl-2-hydroxy-3-oxobutanoate + NADPH + H(+). It participates in amino-acid biosynthesis; L-isoleucine biosynthesis; L-isoleucine from 2-oxobutanoate: step 2/4. Its pathway is amino-acid biosynthesis; L-valine biosynthesis; L-valine from pyruvate: step 2/4. Involved in the biosynthesis of branched-chain amino acids (BCAA). Catalyzes an alkyl-migration followed by a ketol-acid reduction of (S)-2-acetolactate (S2AL) to yield (R)-2,3-dihydroxy-isovalerate. In the isomerase reaction, S2AL is rearranged via a Mg-dependent methyl migration to produce 3-hydroxy-3-methyl-2-ketobutyrate (HMKB). In the reductase reaction, this 2-ketoacid undergoes a metal-dependent reduction by NADPH to yield (R)-2,3-dihydroxy-isovalerate. This is Ketol-acid reductoisomerase (NADP(+)) from Oleidesulfovibrio alaskensis (strain ATCC BAA-1058 / DSM 17464 / G20) (Desulfovibrio alaskensis).